The chain runs to 373 residues: Schlafen-like protein 1 (373 aa).

Residues 1–67 form a disordered region; sequence MAALFEENDS…ELSSEEVDIP (67 aa). The tract at residues 247 to 373 is SLFN-like fold; it reads KAGAKIEFRT…NQVYRLESSV (127 aa).

Belongs to the Schlafen family. Component of the trimeric PUCH (precursor of 21U RNA 5'-end cleavage holoenzyme) complex; consisting of tofu-1, tofu-2 and either slfl-3 or slfl-4; which is required for processing of piRNA precursors. Within the complex, interacts (via N-terminus) with tofu-2 (via N-terminus); the interaction stabilizes tofu-2 and may form a functional nuclease. Within the complex, required for the interaction of tofu-2 (via N-terminus) with slfl-3 (via N-terminus). Interacts (via residues 82-172) with the PETISCO complex subunit tofu-6 (via residues 120-314); the interaction between the PETISCO and PUCH complex members enhances piRNA production in vivo. As to expression, expressed in the germline.

Its subcellular location is the cytoplasm. Functionally, component of the trimeric PUCH (precursor of 21U RNA 5'-end cleavage holoenzyme) complex, that acts as an endoribonuclease processing the 5'-end of precursor Piwi-interacting RNAs (piRNAs). The PUCH complex consists of tofu-1, tofu-2 and either slfl-3 or slfl-4, with tofu-2 exhibiting endoribonuclease activity. PUCH-mediated processing strictly requires a 7-methyl-G cap (m7 G-cap) and an uracil at position three (U3). PUCH also exhibits a strict bias for piRNA precursors with an A or G at position 1. Mature piRNA production is enhanced by the interaction of PUCH with the PETISCO complex, which is stabilizing piRNA precursors and allows their processing by PUCH. The sequence is that of Schlafen-like protein 1 from Caenorhabditis elegans.